Consider the following 318-residue polypeptide: MSTQIAPARISDPAAFGRVAVLLGGTSSEREVSLNSGSNVLDALRARGVDAQPVDGIPALAQALVAQRFDRVFNVLHGHNGGGEDGIVQGLMEAFGVPYTGSNVLGSALSMDKIRTKQVWLSLGLSTPRYARLAAGASAQQIHAAAEQIGLPVIVKPANEGSSVGVSRVFDQAQLDEAVTLAARYDGALLMEQLIEGDELTVAVLGDVALPSIRIVPKGQWYDYNAKYIAEDTQYLCPGLDGDAEAQIGQLALDAFRAAGCSGWGRVDVMRDGSTGQLYLLEVNTAPGMTSHSLVPKAARQLGIDFEALVWRVLEQTL.

In terms of domain architecture, ATP-grasp spans 117–315 (KQVWLSLGLS…FEALVWRVLE (199 aa)). 146 to 201 (AEQIGLPVIVKPANEGSSVGVSRVFDQAQLDEAVTLAARYDGALLMEQLIEGDELT) is an ATP binding site. Positions 268, 282, and 284 each coordinate Mg(2+).

It belongs to the D-alanine--D-alanine ligase family. Requires Mg(2+) as cofactor. Mn(2+) is required as a cofactor.

Its subcellular location is the cytoplasm. The enzyme catalyses 2 D-alanine + ATP = D-alanyl-D-alanine + ADP + phosphate + H(+). It participates in cell wall biogenesis; peptidoglycan biosynthesis. Functionally, cell wall formation. The protein is D-alanine--D-alanine ligase B of Xanthomonas campestris pv. campestris (strain ATCC 33913 / DSM 3586 / NCPPB 528 / LMG 568 / P 25).